We begin with the raw amino-acid sequence, 70 residues long: Large ribosomal subunit protein uL29 (70 aa).

The protein belongs to the universal ribosomal protein uL29 family.

In Prochlorococcus marinus (strain MIT 9303), this protein is Large ribosomal subunit protein uL29.